A 201-amino-acid polypeptide reads, in one-letter code: CDP-diacylglycerol--serine O-phosphatidyltransferase (201 aa).

6 helical membrane-spanning segments follow: residues 19 to 39, 57 to 77, 88 to 108, 112 to 132, 133 to 153, and 162 to 182; these read IITG…LSII, FGAE…PAYL, LISA…FGIL, GFIG…CQLI, NSYL…ISDI, and IFIY…PHFA.

The protein belongs to the CDP-alcohol phosphatidyltransferase class-I family.

Its subcellular location is the cell membrane. The enzyme catalyses a CDP-1,2-diacyl-sn-glycerol + L-serine = a 1,2-diacyl-sn-glycero-3-phospho-L-serine + CMP + H(+). The protein is CDP-diacylglycerol--serine O-phosphatidyltransferase (pssA) of Methanocaldococcus jannaschii (strain ATCC 43067 / DSM 2661 / JAL-1 / JCM 10045 / NBRC 100440) (Methanococcus jannaschii).